The sequence spans 78 residues: Small ribosomal subunit protein bS18 (78 aa).

Belongs to the bacterial ribosomal protein bS18 family. Part of the 30S ribosomal subunit. Forms a tight heterodimer with protein bS6.

Binds as a heterodimer with protein bS6 to the central domain of the 16S rRNA, where it helps stabilize the platform of the 30S subunit. This Geobacillus kaustophilus (strain HTA426) protein is Small ribosomal subunit protein bS18.